A 93-amino-acid polypeptide reads, in one-letter code: UPF0358 protein lmo1070 (93 aa).

The protein belongs to the UPF0358 family.

The polypeptide is UPF0358 protein lmo1070 (Listeria monocytogenes serovar 1/2a (strain ATCC BAA-679 / EGD-e)).